The sequence spans 189 residues: GMP synthase [glutamine-hydrolyzing] subunit A (189 aa).

The Glutamine amidotransferase type-1 domain occupies Met1–Glu189. The Nucleophile role is filled by Cys76. Residues His163 and Glu165 contribute to the active site.

As to quaternary structure, heterodimer composed of a glutamine amidotransferase subunit (A) and a GMP-binding subunit (B).

The catalysed reaction is XMP + L-glutamine + ATP + H2O = GMP + L-glutamate + AMP + diphosphate + 2 H(+). It functions in the pathway purine metabolism; GMP biosynthesis; GMP from XMP (L-Gln route): step 1/1. Catalyzes the synthesis of GMP from XMP. This is GMP synthase [glutamine-hydrolyzing] subunit A from Methanococcus maripaludis (strain C7 / ATCC BAA-1331).